The chain runs to 501 residues: Aspartate--tRNA ligase, cytoplasmic (501 aa).

Position 52 is a phosphothreonine (Thr-52). Lys-74 carries the N6-acetyllysine modification. Position 229 (Glu-229) interacts with L-aspartate. Residue Ser-249 is modified to Phosphoserine. The aspartate stretch occupies residues 251–254; the sequence is QLYK. Arg-273 lines the L-aspartate pocket. Residues 273–275 and 281–283 each bind ATP; these read RAE and RHL. Residue Lys-374 is modified to N6-acetyllysine. The tract at residues 411–415 is binding site for the 3'-end of tRNA; the sequence is KQSNS. Glu-424 is an ATP binding site. L-aspartate is bound by residues Ser-427 and Arg-431. An ATP-binding site is contributed by 472 to 475; that stretch reads GLER. The residue at position 500 (Thr-500) is a Phosphothreonine; by PKA.

Belongs to the class-II aminoacyl-tRNA synthetase family. Type 2 subfamily. In terms of assembly, homodimer. Part of a multisubunit complex that groups tRNA ligases for Arg (RARS1), Asp (DARS1), Gln (QARS1), Ile (IARS1), Leu (LARS1), Lys (KARS1), Met (MARS1) the bifunctional ligase for Glu and Pro (EPRS1) and the auxiliary subunits AIMP1/p43, AIMP2/p38 and EEF1E1/p18.

The protein resides in the cytoplasm. It carries out the reaction tRNA(Asp) + L-aspartate + ATP = L-aspartyl-tRNA(Asp) + AMP + diphosphate. In terms of biological role, catalyzes the specific attachment of an amino acid to its cognate tRNA in a 2 step reaction: the amino acid (AA) is first activated by ATP to form AA-AMP and then transferred to the acceptor end of the tRNA. The protein is Aspartate--tRNA ligase, cytoplasmic (DARS1) of Pongo abelii (Sumatran orangutan).